We begin with the raw amino-acid sequence, 92 residues long: Progonadoliberin-1 (92 aa).

The signal sequence occupies residues 1–23; that stretch reads METIPKLMAAVVLLTVCLEGCSS. The residue at position 24 (Gln-24) is a Pyrrolidone carboxylic acid. Gly-33 is modified (glycine amide).

The protein belongs to the GnRH family. In terms of processing, the precursor is cleaved by ACE, which removes the Gly-Lys-Arg peptide at the C-terminus, leading to mature hormone. The mature form of Gonadoliberin-1 is also cleaved and degraded by ACE. As to expression, central nervous system.

The protein resides in the secreted. In terms of biological role, stimulates the secretion of gonadotropins; it stimulates the secretion of both luteinizing and follicle-stimulating hormones. This Rattus norvegicus (Rat) protein is Progonadoliberin-1 (Gnrh1).